A 277-amino-acid chain; its full sequence is Myelin proteolipid protein (277 aa).

The Cytoplasmic portion of the chain corresponds to 1-10 (MGLLECCARC). S-palmitoyl cysteine attachment occurs at residues cysteine 6, cysteine 7, and cysteine 10. Residues 11–36 (LVGAPFASLVATGLCFFGVALFCGCG) traverse the membrane as a helical segment. Residues 37-59 (HEALTGTEKLIETYFSKNYQDYE) lie on the Extracellular side of the membrane. Residues 60-88 (YLINVIHAFQYVIYGTASFFFLYGALLLA) traverse the membrane as a helical segment. The Cytoplasmic segment spans residues 89–151 (EGFYTTGAVR…LGKWLGHPDK (63 aa)). Residue cysteine 109 is the site of S-palmitoyl cysteine attachment. The residue at position 114 (serine 114) is a Phosphoserine. Residues threonine 116 and threonine 118 each carry the phosphothreonine modification. Residue cysteine 141 is the site of S-palmitoyl cysteine attachment. A helical transmembrane segment spans residues 152–178 (FVGITYALTVVWLLVFACSAVPVYIYF). The Extracellular portion of the chain corresponds to 179–238 (NTWTTCQSIAFPSKTSASIGSLCADARMYGVLPWNAFPGKVCGSNLLSICKTAEFQMTFH). Disulfide bonds link cysteine 184/cysteine 228 and cysteine 201/cysteine 220. The O-palmitoyl serine moiety is linked to residue serine 199. A helical transmembrane segment spans residues 239-268 (LFIAAFVGAAATLISLLTFMIAATYNFAVL). Residues 269–277 (KLMGRGTKF) are Cytoplasmic-facing.

This sequence belongs to the myelin proteolipid protein family.

Its subcellular location is the cell membrane. It localises to the myelin membrane. In terms of biological role, this is the major myelin protein from the central nervous system. It plays an important role in the formation or maintenance of the multilamellar structure of myelin. The sequence is that of Myelin proteolipid protein (PLP1) from Macaca fascicularis (Crab-eating macaque).